A 163-amino-acid polypeptide reads, in one-letter code: Transcriptional repressor NrdR (163 aa).

A zinc finger lies at 3–34; sequence CPFCAYADTRVVDSRLADDGGSVRRRRECPQC. An ATP-cone domain is found at 49-139; the sequence is PVVVKTDGRR…VYRRFEDVDA (91 aa).

The protein belongs to the NrdR family. It depends on Zn(2+) as a cofactor.

Negatively regulates transcription of bacterial ribonucleotide reductase nrd genes and operons by binding to NrdR-boxes. The protein is Transcriptional repressor NrdR of Acidithiobacillus ferrooxidans (strain ATCC 23270 / DSM 14882 / CIP 104768 / NCIMB 8455) (Ferrobacillus ferrooxidans (strain ATCC 23270)).